The sequence spans 404 residues: MKLPIYLDYSATTPVDPRVAEKMMQCLTIDGIFGNPASRSHRFGWQAEEAIDIARNQIADLIGADPREIVFTSGATEADNLALKGVANFYQKKGKHIITSKTEHKAILDTCRQLEREGFEVTYLAPKSDGLIDLKELEAAMRDDTILVSIMHVNNEIGVVQDIAAIGELCRSKGIIYHVDATQSVGKLPIDLSKLKVDLLSLSAHKVYGPMGIGALYVRRKPRIRLEAQMHGGGHERGMRSGTLAVHQIVGMGEAYRILKEEMADETKRLNELRLRLWNGIKDIEEVYINGSLEHTAPNILNVSFNYVEGESLMMALKDLAVSSGSACTSASLEPSYVLRALGLTDELAHSSIRFSLGRFTTEEEIDYAIEQIHSAIGRLRDLSPLWEMHKQGVDINSIEWSHH.

Pyridoxal 5'-phosphate-binding positions include 75–76, Asn-155, Gln-183, and 203–205; these read AT and SAH. The residue at position 206 (Lys-206) is an N6-(pyridoxal phosphate)lysine. Thr-243 is a binding site for pyridoxal 5'-phosphate. The active-site Cysteine persulfide intermediate is Cys-328. Residue Cys-328 coordinates [2Fe-2S] cluster.

Belongs to the class-V pyridoxal-phosphate-dependent aminotransferase family. NifS/IscS subfamily. In terms of assembly, homodimer. Forms a heterotetramer with IscU, interacts with other sulfur acceptors. Requires pyridoxal 5'-phosphate as cofactor.

It is found in the cytoplasm. The catalysed reaction is (sulfur carrier)-H + L-cysteine = (sulfur carrier)-SH + L-alanine. It participates in cofactor biosynthesis; iron-sulfur cluster biosynthesis. In terms of biological role, master enzyme that delivers sulfur to a number of partners involved in Fe-S cluster assembly, tRNA modification or cofactor biosynthesis. Catalyzes the removal of elemental sulfur atoms from cysteine to produce alanine. Functions as a sulfur delivery protein for Fe-S cluster synthesis onto IscU, an Fe-S scaffold assembly protein, as well as other S acceptor proteins. The polypeptide is Cysteine desulfurase IscS (Proteus mirabilis (strain HI4320)).